The chain runs to 536 residues: Lipid scramblase CLPTM1L (536 aa).

Over 1 to 9 the chain is Cytoplasmic; sequence MLSRSSFTS. A helical membrane pass occupies residues 10–30; sequence LAVGVFAVYVAHTCWVMYGIV. Topologically, residues 31 to 284 are extracellular; that stretch reads YTRPCPSGGA…VKGIFVDTNL (254 aa). Asn-92, Asn-102, and Asn-229 each carry an N-linked (GlcNAc...) asparagine glycan. The helical transmembrane segment at 285–305 threads the bilayer; it reads YFLALTFFVAAFHLLFDFLAF. Over 306 to 324 the chain is Cytoplasmic; that stretch reads KNDISFWKKKRSMIGMSTK. The helical transmembrane segment at 325–342 threads the bilayer; sequence AVLWRCFSTVVIFLFLLD. Residues 343–346 lie on the Extracellular side of the membrane; that stretch reads EQTS. Residues 347–364 form a helical membrane-spanning segment; it reads LLVLIPAGIGAVIELWKV. The Cytoplasmic segment spans residues 365–402; it reads KKALKMTVKWQGIRPKVQFGASNDSEKKTEEYDTQAMK. Residues 403 to 423 traverse the membrane as a helical segment; that stretch reads YLSYLLYPLCIGGAAYSLLNV. Over 424 to 428 the chain is Extracellular; that stretch reads KYKSW. Residues 429–449 traverse the membrane as a helical segment; it reads YSWLINSFVNGVYAFGFLFML. At 450-536 the chain is on the cytoplasmic side; sequence PQLFVNYKMK…YEEKPKKKSS (87 aa).

This sequence belongs to the CLPTM1 family.

It is found in the endoplasmic reticulum membrane. The catalysed reaction is a 6-(alpha-D-glucosaminyl)-1-(1,2-diacyl-sn-glycero-3-phospho)-1D-myo-inositol(in) = a 6-(alpha-D-glucosaminyl)-1-(1,2-diacyl-sn-glycero-3-phospho)-1D-myo-inositol(out). It catalyses the reaction 6-(alpha-D-glucosaminyl)-(1-octadecanoyl,2-(9Z)-octadecenoyl-sn-glycero-3-phospho)-1D-myo-inositol(in) = 6-(alpha-D-glucosaminyl)-(1-octadecanoyl,2-(9Z)-octadecenoyl-sn-glycero-3-phospho)-1D-myo-inositol(out). It carries out the reaction a 1,2-diacyl-sn-glycero-3-phospho-(1D-myo-inositol)(in) = a 1,2-diacyl-sn-glycero-3-phospho-(1D-myo-inositol)(out). The enzyme catalyses a 1,2-diacyl-sn-glycero-3-phosphocholine(in) = a 1,2-diacyl-sn-glycero-3-phosphocholine(out). The catalysed reaction is a 1,2-diacyl-sn-glycero-3-phosphoethanolamine(in) = a 1,2-diacyl-sn-glycero-3-phosphoethanolamine(out). Scramblase that mediates the translocation of glucosaminylphosphatidylinositol (alpha-D-GlcN-(1-6)-(1,2-diacyl-sn-glycero-3-phospho)-1D-myo-inositol, GlcN-PI) across the endoplasmic reticulum (ER) membrane, from the cytosolic leaflet to the luminal leaflet of the ER membrane, where it participates in the biosynthesis of glycosylphosphatidylinositol (GPI). GPI is a lipid glycoconjugate involved in post-translational modification of proteins. Can also translocate 1,2-diacyl-sn-glycero-3-phospho-(1D-myo-inositol) (phosphatidylinositol or PI), as well as several other phospholipids (1,2-diacyl-sn-glycero-3-phosphocholine, 1,2-diacyl-sn-glycero-3-phosphoethanolamine), and N-acetylglucosaminylphosphatidylinositol (GlcNAc-PI) in vitro. The polypeptide is Lipid scramblase CLPTM1L (CLPTM1L) (Gallus gallus (Chicken)).